The primary structure comprises 314 residues: DNA-directed RNA polymerase subunit alpha (314 aa).

The tract at residues 1–228 (MIEIEKPRIE…EHLNIFVGLT (228 aa)) is alpha N-terminal domain (alpha-NTD). The alpha C-terminal domain (alpha-CTD) stretch occupies residues 245 to 314 (KEKVLEMSIE…DLGLGLRKED (70 aa)).

It belongs to the RNA polymerase alpha chain family. As to quaternary structure, homodimer. The RNAP catalytic core consists of 2 alpha, 1 beta, 1 beta' and 1 omega subunit. When a sigma factor is associated with the core the holoenzyme is formed, which can initiate transcription.

The catalysed reaction is RNA(n) + a ribonucleoside 5'-triphosphate = RNA(n+1) + diphosphate. Its function is as follows. DNA-dependent RNA polymerase catalyzes the transcription of DNA into RNA using the four ribonucleoside triphosphates as substrates. The sequence is that of DNA-directed RNA polymerase subunit alpha from Staphylococcus haemolyticus (strain JCSC1435).